Here is an 85-residue protein sequence, read N- to C-terminus: Small ribosomal subunit protein uS17 (85 aa).

The protein belongs to the universal ribosomal protein uS17 family. In terms of assembly, part of the 30S ribosomal subunit.

Its function is as follows. One of the primary rRNA binding proteins, it binds specifically to the 5'-end of 16S ribosomal RNA. The polypeptide is Small ribosomal subunit protein uS17 (Actinobacillus succinogenes (strain ATCC 55618 / DSM 22257 / CCUG 43843 / 130Z)).